The primary structure comprises 1070 residues: Carbamoyl phosphate synthase large chain (1070 aa).

The segment at 1–401 is carboxyphosphate synthetic domain; that stretch reads MPKRDDIKTI…ALLKAVRSLE (401 aa). 12 residues coordinate ATP: Arg129, Arg169, Gly175, Gly176, Lys208, Ile210, Glu215, Gly241, Ile242, His243, Gln284, and Glu298. In terms of domain architecture, ATP-grasp 1 spans 133–327; the sequence is RDLMNELGEP…IAKLAAKIAV (195 aa). Residues Gln284, Glu298, and Asn300 each coordinate Mg(2+). The Mn(2+) site is built by Gln284, Glu298, and Asn300. Positions 402 to 546 are oligomerization domain; the sequence is IGADHLLLEE…YSTYEEENES (145 aa). Positions 547–929 are carbamoyl phosphate synthetic domain; that stretch reads TRSAKESVIV…ALYKGFVASG (383 aa). The ATP-grasp 2 domain occupies 671–861; that stretch reads EKALEILQIP…MANVATRVIL (191 aa). Residues Arg707, Arg746, Val748, Glu752, Gly777, Val778, His779, Ser780, Gln820, and Glu832 each contribute to the ATP site. Residues Gln820, Glu832, and Asn834 each contribute to the Mg(2+) site. Residues Gln820, Glu832, and Asn834 each contribute to the Mn(2+) site. In terms of domain architecture, MGS-like spans 930–1070; sequence TTMHDYGTVL…SEVKQPKARV (141 aa). The interval 930–1070 is allosteric domain; that stretch reads TTMHDYGTVL…SEVKQPKARV (141 aa).

It belongs to the CarB family. Composed of two chains; the small (or glutamine) chain promotes the hydrolysis of glutamine to ammonia, which is used by the large (or ammonia) chain to synthesize carbamoyl phosphate. Tetramer of heterodimers (alpha,beta)4. Mg(2+) is required as a cofactor. Requires Mn(2+) as cofactor.

It carries out the reaction hydrogencarbonate + L-glutamine + 2 ATP + H2O = carbamoyl phosphate + L-glutamate + 2 ADP + phosphate + 2 H(+). The catalysed reaction is hydrogencarbonate + NH4(+) + 2 ATP = carbamoyl phosphate + 2 ADP + phosphate + 2 H(+). It functions in the pathway amino-acid biosynthesis; L-arginine biosynthesis; carbamoyl phosphate from bicarbonate: step 1/1. The protein operates within pyrimidine metabolism; UMP biosynthesis via de novo pathway; (S)-dihydroorotate from bicarbonate: step 1/3. Large subunit of the glutamine-dependent carbamoyl phosphate synthetase (CPSase). CPSase catalyzes the formation of carbamoyl phosphate from the ammonia moiety of glutamine, carbonate, and phosphate donated by ATP, constituting the first step of 2 biosynthetic pathways, one leading to arginine and/or urea and the other to pyrimidine nucleotides. The large subunit (synthetase) binds the substrates ammonia (free or transferred from glutamine from the small subunit), hydrogencarbonate and ATP and carries out an ATP-coupled ligase reaction, activating hydrogencarbonate by forming carboxy phosphate which reacts with ammonia to form carbamoyl phosphate. The sequence is that of Carbamoyl phosphate synthase large chain from Listeria monocytogenes serotype 4b (strain F2365).